We begin with the raw amino-acid sequence, 434 residues long: Asparagine--tRNA ligase (434 aa).

It belongs to the class-II aminoacyl-tRNA synthetase family. Homodimer.

The protein resides in the cytoplasm. It carries out the reaction tRNA(Asn) + L-asparagine + ATP = L-asparaginyl-tRNA(Asn) + AMP + diphosphate + H(+). The chain is Asparagine--tRNA ligase from Oenococcus oeni (strain ATCC BAA-331 / PSU-1).